A 468-amino-acid chain; its full sequence is MPEDGGGDSGDVPEIIPDGEPLREEQRPLKQSLGSSLCRESHWKCLLLTLLIHACGAVVAWCRLATVPRLVLGPEAALARGGGGPPPTYPASPCSDGYLYIPLAFVSLLYLLYLAECWHCHVRSCQAPRTDASTVLALIRRLQQAPPCVWWKATSYHYVRRTRQITRYRNGDAYTTTQVYHERADSRTARGEFDYSAHGVRDVSKELVGLADHAATRLRFTKCFSFGSAEAEASYLTQRARFFSANEGLDDYLEAREGMHLKDVDFRESLMVFADPRSPPWYARAWVFWLVSAATLSWPLRVVAAYGTAHVHYQVEKLFGASSPPPGAVPSGPPLSRVATVDFTELEWHICSNRQLVPSYSEAVVMGAGSGAYLRGCQRCRRSVSSNSLPPARPSGPRLPFSRSRLSLGAGGRATPGVFRSLSGGPLGRRGEDTEPLESPPCYEDALYFPVLIVHGDSGCQGDGQGAL.

The segment at 1-25 is disordered; sequence MPEDGGGDSGDVPEIIPDGEPLREE. 2 helical membrane-spanning segments follow: residues 45 to 65 and 98 to 118; these read CLLL…CRLA and YLYI…AECW. The interval 384–438 is disordered; that stretch reads VSSNSLPPARPSGPRLPFSRSRLSLGAGGRATPGVFRSLSGGPLGRRGEDTEPLE.

Belongs to the TMEM151 family.

Its subcellular location is the membrane. The chain is Transmembrane protein 151B (TMEM151B) from Bos taurus (Bovine).